A 125-amino-acid polypeptide reads, in one-letter code: MPKKSFQRAERISVQIHRDLGALVQAAVRDHGLPSMSVSDVEVTRDMAHAKVFVTALQAERSFEAVAGLKALARELRMQLAHTMRLRFVPELHFHYDDSLDRGERINTLLRDLIPPADAEKDECG.

The protein belongs to the RbfA family. In terms of assembly, monomer. Binds 30S ribosomal subunits, but not 50S ribosomal subunits or 70S ribosomes.

Its subcellular location is the cytoplasm. Its function is as follows. One of several proteins that assist in the late maturation steps of the functional core of the 30S ribosomal subunit. Associates with free 30S ribosomal subunits (but not with 30S subunits that are part of 70S ribosomes or polysomes). Required for efficient processing of 16S rRNA. May interact with the 5'-terminal helix region of 16S rRNA. The chain is Ribosome-binding factor A from Xylella fastidiosa (strain 9a5c).